The following is a 209-amino-acid chain: Uracil phosphoribosyltransferase (209 aa).

Residues Arg79, Arg104, and 131–139 each bind 5-phospho-alpha-D-ribose 1-diphosphate; that span reads DPMLATGGS. Uracil contacts are provided by residues Ile194 and 199 to 201; that span reads GDA. Asp200 provides a ligand contact to 5-phospho-alpha-D-ribose 1-diphosphate.

The protein belongs to the UPRTase family. Mg(2+) is required as a cofactor.

It carries out the reaction UMP + diphosphate = 5-phospho-alpha-D-ribose 1-diphosphate + uracil. It participates in pyrimidine metabolism; UMP biosynthesis via salvage pathway; UMP from uracil: step 1/1. With respect to regulation, allosterically activated by GTP. Functionally, catalyzes the conversion of uracil and 5-phospho-alpha-D-ribose 1-diphosphate (PRPP) to UMP and diphosphate. This is Uracil phosphoribosyltransferase from Lactobacillus delbrueckii subsp. bulgaricus (strain ATCC 11842 / DSM 20081 / BCRC 10696 / JCM 1002 / NBRC 13953 / NCIMB 11778 / NCTC 12712 / WDCM 00102 / Lb 14).